Here is a 949-residue protein sequence, read N- to C-terminus: Valine--tRNA ligase (949 aa).

The 'HIGH' region motif lies at 45-55; it reads PNVTGVLHMGH. Residues 561–565 carry the 'KMSKS' region motif; that stretch reads KMSKS. Lys-564 lines the ATP pocket. Residues 882 to 949 are a coiled coil; sequence EELLKQEKTR…EIKEKLMTLP (68 aa).

It belongs to the class-I aminoacyl-tRNA synthetase family. ValS type 1 subfamily. Monomer.

The protein resides in the cytoplasm. The catalysed reaction is tRNA(Val) + L-valine + ATP = L-valyl-tRNA(Val) + AMP + diphosphate. Its function is as follows. Catalyzes the attachment of valine to tRNA(Val). As ValRS can inadvertently accommodate and process structurally similar amino acids such as threonine, to avoid such errors, it has a 'posttransfer' editing activity that hydrolyzes mischarged Thr-tRNA(Val) in a tRNA-dependent manner. In Protochlamydia amoebophila (strain UWE25), this protein is Valine--tRNA ligase.